Consider the following 370-residue polypeptide: Homospermidine synthase 2 (370 aa).

This sequence belongs to the deoxyhypusine synthase family. Homotetramer. NAD(+) serves as cofactor. Post-translationally, the N-terminus is blocked. In terms of tissue distribution, expressed in roots.

The catalysed reaction is putrescine + spermidine = sym-homospermidine + propane-1,3-diamine. The protein operates within alkaloid biosynthesis; pyrrolizidine alkaloid biosynthesis. Functionally, catalyzes the transfer of an aminobutyl unit from spermidine onto putrescine. The resulting polyamine homospermidine is a precursor in the biosynthesis of pyrrolizidine alkaloids. This Senecio vernalis (Spring groundsel) protein is Homospermidine synthase 2.